Consider the following 362-residue polypeptide: Microfibril-associated glycoprotein 3 (362 aa).

An N-terminal signal peptide occupies residues Met1–Ala18. The Extracellular segment spans residues Ala19–Met147. N-linked (GlcNAc...) asparagine glycans are attached at residues Asn36, Asn41, and Asn110. Residues Pro45–Thr137 enclose the Ig-like C2-type domain. A disulfide bond links Cys73 and Cys124. Residues Ser148–Leu170 traverse the membrane as a helical segment. Residues Cys171–Leu362 are Cytoplasmic-facing. 2 disordered regions span residues Val285–Asn306 and Glu323–Cys350. The span at Glu323 to Phe337 shows a compositional bias: polar residues.

In terms of processing, glycosylated.

The protein localises to the cell membrane. Functionally, component of the elastin-associated microfibrils. In Homo sapiens (Human), this protein is Microfibril-associated glycoprotein 3 (MFAP3).